The primary structure comprises 368 residues: uncharacterized protein (368 aa).

Belongs to the CdaR family.

This is an uncharacterized protein from Haemophilus influenzae (strain ATCC 51907 / DSM 11121 / KW20 / Rd).